A 144-amino-acid polypeptide reads, in one-letter code: Sec-independent protein translocase protein TatB (144 aa).

A helical transmembrane segment spans residues 1-21 (MFEIGFWELVLVAIIGIVVVG). Residues 97-144 (KMIDEPPYQEPPPAAHSVQTDAEAYRDTGIEPADKSSSPEHHHDDAAR) form a disordered region. The segment covering 119–144 (EAYRDTGIEPADKSSSPEHHHDDAAR) has biased composition (basic and acidic residues).

The protein belongs to the TatB family. The Tat system comprises two distinct complexes: a TatABC complex, containing multiple copies of TatA, TatB and TatC subunits, and a separate TatA complex, containing only TatA subunits. Substrates initially bind to the TatABC complex, which probably triggers association of the separate TatA complex to form the active translocon.

The protein localises to the cell inner membrane. Its function is as follows. Part of the twin-arginine translocation (Tat) system that transports large folded proteins containing a characteristic twin-arginine motif in their signal peptide across membranes. Together with TatC, TatB is part of a receptor directly interacting with Tat signal peptides. TatB may form an oligomeric binding site that transiently accommodates folded Tat precursor proteins before their translocation. In Dichelobacter nodosus (strain VCS1703A), this protein is Sec-independent protein translocase protein TatB.